Reading from the N-terminus, the 211-residue chain is Thymidylate kinase (211 aa).

An ATP-binding site is contributed by 10–17; the sequence is GGDGVGKS.

The protein belongs to the thymidylate kinase family.

The catalysed reaction is dTMP + ATP = dTDP + ADP. Functionally, phosphorylation of dTMP to form dTDP in both de novo and salvage pathways of dTTP synthesis. The chain is Thymidylate kinase from Clavibacter michiganensis subsp. michiganensis (strain NCPPB 382).